A 37-amino-acid polypeptide reads, in one-letter code: Cytochrome b6-f complex subunit 5 (37 aa).

A helical transmembrane segment spans residues 5–25; sequence LLSGIVLGMITVSALGLFVAA.

It belongs to the PetG family. The 4 large subunits of the cytochrome b6-f complex are cytochrome b6, subunit IV (17 kDa polypeptide, PetD), cytochrome f and the Rieske protein, while the 4 small subunits are PetG, PetL, PetM and PetN. The complex functions as a dimer.

The protein resides in the plastid. Its subcellular location is the chloroplast thylakoid membrane. In terms of biological role, component of the cytochrome b6-f complex, which mediates electron transfer between photosystem II (PSII) and photosystem I (PSI), cyclic electron flow around PSI, and state transitions. PetG is required for either the stability or assembly of the cytochrome b6-f complex. The sequence is that of Cytochrome b6-f complex subunit 5 from Trieres chinensis (Marine centric diatom).